A 196-amino-acid chain; its full sequence is dITP/XTP pyrophosphatase (196 aa).

10 to 15 contacts substrate; it reads SGNKGK. Residues glutamate 40 and aspartate 69 each contribute to the Mg(2+) site. Residue aspartate 69 is the Proton acceptor of the active site. Residues serine 70, 147–150, lysine 170, and 175–176 each bind substrate; these read FGYD and HR.

This sequence belongs to the HAM1 NTPase family. As to quaternary structure, homodimer. Mg(2+) serves as cofactor.

It catalyses the reaction XTP + H2O = XMP + diphosphate + H(+). The catalysed reaction is dITP + H2O = dIMP + diphosphate + H(+). The enzyme catalyses ITP + H2O = IMP + diphosphate + H(+). Functionally, pyrophosphatase that catalyzes the hydrolysis of nucleoside triphosphates to their monophosphate derivatives, with a high preference for the non-canonical purine nucleotides XTP (xanthosine triphosphate), dITP (deoxyinosine triphosphate) and ITP. Seems to function as a house-cleaning enzyme that removes non-canonical purine nucleotides from the nucleotide pool, thus preventing their incorporation into DNA/RNA and avoiding chromosomal lesions. The sequence is that of dITP/XTP pyrophosphatase from Prochlorococcus marinus (strain NATL1A).